A 113-amino-acid chain; its full sequence is UPF0102 protein SUN_0231 (113 aa).

This sequence belongs to the UPF0102 family.

In Sulfurovum sp. (strain NBC37-1), this protein is UPF0102 protein SUN_0231.